The following is a 336-amino-acid chain: Anthranilate phosphoribosyltransferase (336 aa).

Residues G79, 82 to 83, T87, 89 to 92, 107 to 115, and S119 each bind 5-phospho-alpha-D-ribose 1-diphosphate; these read GD, NIST, and KHGNRAMSS. Residue G79 coordinates anthranilate. Residue S91 participates in Mg(2+) binding. N110 provides a ligand contact to anthranilate. R165 serves as a coordination point for anthranilate. Positions 225 and 226 each coordinate Mg(2+).

This sequence belongs to the anthranilate phosphoribosyltransferase family. As to quaternary structure, homodimer. Requires Mg(2+) as cofactor.

It catalyses the reaction N-(5-phospho-beta-D-ribosyl)anthranilate + diphosphate = 5-phospho-alpha-D-ribose 1-diphosphate + anthranilate. It participates in amino-acid biosynthesis; L-tryptophan biosynthesis; L-tryptophan from chorismate: step 2/5. Catalyzes the transfer of the phosphoribosyl group of 5-phosphorylribose-1-pyrophosphate (PRPP) to anthranilate to yield N-(5'-phosphoribosyl)-anthranilate (PRA). This Dictyoglomus thermophilum (strain ATCC 35947 / DSM 3960 / H-6-12) protein is Anthranilate phosphoribosyltransferase.